The following is an 85-amino-acid chain: Large ribosomal subunit protein bL27 (85 aa).

A compositionally biased stretch (polar residues) spans 1-11 (MASKASGGSTR). The interval 1–20 (MASKASGGSTRNGRDSISKR) is disordered.

The protein belongs to the bacterial ribosomal protein bL27 family.

The polypeptide is Large ribosomal subunit protein bL27 (Sulfurihydrogenibium sp. (strain YO3AOP1)).